The primary structure comprises 132 residues: Small ribosomal subunit protein uS9 (132 aa).

Residues 100 to 132 form a disordered region; it reads LKSNGLLTRDDRTKERKKPGLKRARKAPQYTKR. Residues 114–132 show a composition bias toward basic residues; the sequence is ERKKPGLKRARKAPQYTKR.

The protein belongs to the universal ribosomal protein uS9 family.

The protein is Small ribosomal subunit protein uS9 of Dehalococcoides mccartyi (strain ATCC BAA-2266 / KCTC 15142 / 195) (Dehalococcoides ethenogenes (strain 195)).